Consider the following 259-residue polypeptide: Beta-glucanase (259 aa).

The N-terminal stretch at 1–31 is a signal peptide; it reads MVKSKYLVFISVFSLLFGVFVVGFSHQGVKA. Residues 35–255 enclose the GH16 domain; sequence RPMGTAFYES…WVRYTPLQNY (221 aa). The active-site Nucleophile is glutamate 142. The active-site Proton donor is glutamate 146.

This sequence belongs to the glycosyl hydrolase 16 family.

It catalyses the reaction Hydrolysis of (1-&gt;4)-beta-D-glucosidic linkages in beta-D-glucans containing (1-&gt;3)- and (1-&gt;4)-bonds.. In terms of biological role, hydrolyzes B-glucans containing mixed beta-1,3 and beta-1,4 linkages. This is Beta-glucanase (bglBB) from Brevibacillus brevis (Bacillus brevis).